Reading from the N-terminus, the 322-residue chain is tRNA-dihydrouridine synthase B (322 aa).

FMN contacts are provided by residues 16 to 18 (PMA) and Gln70. Residue Cys100 is the Proton donor of the active site. FMN contacts are provided by residues Lys139, 200–202 (NGD), and 224–225 (GR).

The protein belongs to the Dus family. DusB subfamily. Requires FMN as cofactor.

The catalysed reaction is a 5,6-dihydrouridine in tRNA + NAD(+) = a uridine in tRNA + NADH + H(+). It catalyses the reaction a 5,6-dihydrouridine in tRNA + NADP(+) = a uridine in tRNA + NADPH + H(+). Its function is as follows. Catalyzes the synthesis of 5,6-dihydrouridine (D), a modified base found in the D-loop of most tRNAs, via the reduction of the C5-C6 double bond in target uridines. The protein is tRNA-dihydrouridine synthase B of Shewanella oneidensis (strain ATCC 700550 / JCM 31522 / CIP 106686 / LMG 19005 / NCIMB 14063 / MR-1).